We begin with the raw amino-acid sequence, 259 residues long: uncharacterized protein (259 aa).

Helical transmembrane passes span Ile-9–Leu-31, Leu-84–Phe-106, Phe-126–Gly-148, Ser-153–Val-175, His-196–Ala-215, and Thr-230–Gly-252.

It localises to the cell membrane. This is an uncharacterized protein from Archaeoglobus fulgidus (strain ATCC 49558 / DSM 4304 / JCM 9628 / NBRC 100126 / VC-16).